Consider the following 164-residue polypeptide: 16S rRNA aminocarboxypropyltransferase (164 aa).

Residues T18, I66, L87, and S106 each coordinate S-adenosyl-L-methionine.

Belongs to the TDD superfamily. TSR3 family.

It localises to the cytoplasm. The enzyme catalyses an N(1)-methylpseudouridine in rRNA + S-adenosyl-L-methionine = N(1)-methyl-N(3)-[(3S)-3-amino-3-carboxypropyl]pseudouridine in rRNA + S-methyl-5'-thioadenosine + H(+). Aminocarboxypropyltransferase that catalyzes the aminocarboxypropyl transfer on pseudouridine corresponding to position 914 in M.jannaschii 16S rRNA. It constitutes the last step in biosynthesis of the hypermodified N1-methyl-N3-(3-amino-3-carboxypropyl) pseudouridine (m1acp3-Psi). This Thermoplasma volcanium (strain ATCC 51530 / DSM 4299 / JCM 9571 / NBRC 15438 / GSS1) protein is 16S rRNA aminocarboxypropyltransferase.